Consider the following 170-residue polypeptide: Putative calmodulin-like protein 6 (170 aa).

EF-hand domains are found at residues 8–43, 44–79, 84–119, and 120–155; these read QQIS…LGMA, PSQE…KLYE, DDEE…LGEE, and MTED…TWNI. Ca(2+) is bound by residues D21, N23, D25, C27, E32, D57, D59, N61, T63, E68, D97, D99, N101, E108, D133, N135, D137, Q139, and E144.

The protein belongs to the calmodulin family.

Functionally, potential calcium sensor. This chain is Putative calmodulin-like protein 6 (CML6), found in Oryza sativa subsp. japonica (Rice).